A 1242-amino-acid polypeptide reads, in one-letter code: DNA excision repair protein ERCC-6-like (1242 aa).

Position 14 is a phosphoserine (S14). A TPR 1 repeat occupies 21 to 54 (YLRYVKEAKEATKNGDLEQALKLFNLAKDIFPNE). The 169-residue stretch at 109–277 (SLYRDGRRGG…WSLFDFACQG (169 aa)) folds into the Helicase ATP-binding domain. 122–129 (DDMGLGKT) contributes to the ATP binding site. Positions 228–231 (DEAH) match the DEAH box motif. The region spanning 466 to 626 (FLMDLLKKLR…PFRYFSKQEL (161 aa)) is the Helicase C-terminal domain. A phosphoserine mark is found at S755 and S773. Residue T815 is modified to Phosphothreonine. Phosphoserine is present on residues S963, S989, S998, and S1021. T1055 carries the phosphothreonine modification. Phosphoserine occurs at positions 1061, 1090, and 1110. The interval 1103–1181 (EERLDNSSEA…LSDGQLVDSP (79 aa)) is disordered. Basic and acidic residues-rich tracts occupy residues 1105–1121 (RLDN…HLEE) and 1130–1140 (APEHTKEDPSR). The segment covering 1141–1156 (ETLSSENKSSQLSTSK) has biased composition (polar residues). Phosphoserine occurs at positions 1173 and 1180. A TPR 2 repeat occupies 1192-1225 (YDTLVLHGKELKECGKIQEALDCLVKALDIKSSD).

The protein belongs to the SNF2/RAD54 helicase family. As to quaternary structure, interacts with PLK1, which phosphorylates it. Both proteins are mutually dependent on each other for correct subcellular localization. Interacts (via N-terminal TPR repeat) with BEND3 (via BEN domains 1 and 3); the interaction is direct. Post-translationally, phosphorylation by PLK1 prevents the association with chromosome arms and restricts its localization to the kinetochore-centromere region.

The protein localises to the chromosome. It localises to the centromere. The protein resides in the kinetochore. The enzyme catalyses ATP + H2O = ADP + phosphate + H(+). Its function is as follows. DNA helicase that acts as a tension sensor that associates with catenated DNA which is stretched under tension until it is resolved during anaphase. Functions as ATP-dependent DNA translocase. Can promote Holliday junction branch migration (in vitro). This Bos taurus (Bovine) protein is DNA excision repair protein ERCC-6-like (ERCC6L).